The sequence spans 546 residues: MFS-type transporter patC (546 aa).

Positions 1–15 are enriched in polar residues; sequence MSIDASPSESVLESQ. The tract at residues 1–29 is disordered; it reads MSIDASPSESVLESQTPDRVDESIPIKAE. A compositionally biased stretch (basic and acidic residues) spans 16–29; the sequence is TPDRVDESIPIKAE. 14 consecutive transmembrane segments (helical) span residues 41-61, 89-109, 113-133, 143-163, 171-191, 203-223, 245-265, 277-297, 318-338, 350-370, 379-399, 416-436, 447-467, and 515-535; these read IVGF…LLYG, VGFT…YAIF, WLFL…GAAP, VWAG…ITIL, VYVG…PIIG, WSFY…VFLL, WVGT…IVFG, IALY…QYFC, LLLY…VYYI, GIMS…TILL, GYFI…AVLM, ILMG…PAIV, FMNI…SAIF, and VIVS…ALYV.

It belongs to the major facilitator superfamily. TCR/Tet family.

It is found in the vacuole membrane. Its subcellular location is the cell membrane. Its function is as follows. MFS-type transporter; part of the gene cluster that mediates the biosynthesis of patulin, an acetate-derived tetraketide mycotoxin produced by several fungal species that shows antimicrobial properties against several bacteria. May be involved in the secretion of E-ascladiol to be converted to patulin by the secreted patulin synthase patE. This is MFS-type transporter patC from Penicillium expansum (Blue mold rot fungus).